Consider the following 228-residue polypeptide: Cytochrome c oxidase subunit 2 (228 aa).

Over 1–14 (MAYPLQLGFQDATS) the chain is Mitochondrial intermembrane. A helical membrane pass occupies residues 15–45 (PVMEELLHFHDHTLMIIFLISSLVLYIIMLM). Topologically, residues 46-59 (LTSKLVHTNMMNVQ) are mitochondrial matrix. Residues 60–87 (EMEMIWTILPAIILILIALPSLHTLYMM) form a helical membrane-spanning segment. Residues 88–228 (DEINNPLLTI…FENWSASLAQ (141 aa)) lie on the Mitochondrial intermembrane side of the membrane. 6 residues coordinate Cu cation: His-161, Cys-196, Glu-198, Cys-200, His-204, and Met-207. Residue Glu-198 coordinates Mg(2+). Tyr-218 is subject to Phosphotyrosine.

Belongs to the cytochrome c oxidase subunit 2 family. As to quaternary structure, component of the cytochrome c oxidase (complex IV, CIV), a multisubunit enzyme composed of 14 subunits. The complex is composed of a catalytic core of 3 subunits MT-CO1, MT-CO2 and MT-CO3, encoded in the mitochondrial DNA, and 11 supernumerary subunits COX4I, COX5A, COX5B, COX6A, COX6B, COX6C, COX7A, COX7B, COX7C, COX8 and NDUFA4, which are encoded in the nuclear genome. The complex exists as a monomer or a dimer and forms supercomplexes (SCs) in the inner mitochondrial membrane with NADH-ubiquinone oxidoreductase (complex I, CI) and ubiquinol-cytochrome c oxidoreductase (cytochrome b-c1 complex, complex III, CIII), resulting in different assemblies (supercomplex SCI(1)III(2)IV(1) and megacomplex MCI(2)III(2)IV(2)). Found in a complex with TMEM177, COA6, COX18, COX20, SCO1 and SCO2. Interacts with TMEM177 in a COX20-dependent manner. Interacts with COX20. Interacts with COX16. Requires Cu cation as cofactor.

Its subcellular location is the mitochondrion inner membrane. The enzyme catalyses 4 Fe(II)-[cytochrome c] + O2 + 8 H(+)(in) = 4 Fe(III)-[cytochrome c] + 2 H2O + 4 H(+)(out). Its function is as follows. Component of the cytochrome c oxidase, the last enzyme in the mitochondrial electron transport chain which drives oxidative phosphorylation. The respiratory chain contains 3 multisubunit complexes succinate dehydrogenase (complex II, CII), ubiquinol-cytochrome c oxidoreductase (cytochrome b-c1 complex, complex III, CIII) and cytochrome c oxidase (complex IV, CIV), that cooperate to transfer electrons derived from NADH and succinate to molecular oxygen, creating an electrochemical gradient over the inner membrane that drives transmembrane transport and the ATP synthase. Cytochrome c oxidase is the component of the respiratory chain that catalyzes the reduction of oxygen to water. Electrons originating from reduced cytochrome c in the intermembrane space (IMS) are transferred via the dinuclear copper A center (CU(A)) of subunit 2 and heme A of subunit 1 to the active site in subunit 1, a binuclear center (BNC) formed by heme A3 and copper B (CU(B)). The BNC reduces molecular oxygen to 2 water molecules using 4 electrons from cytochrome c in the IMS and 4 protons from the mitochondrial matrix. The chain is Cytochrome c oxidase subunit 2 (MT-CO2) from Loxodonta africana (African elephant).